The chain runs to 367 residues: tRNA uridine(34) hydroxylase (367 aa).

The Rhodanese domain maps to 159–249 (EDKNSIVVDV…GIISYAHEIS (91 aa)). Catalysis depends on C213, which acts as the Cysteine persulfide intermediate.

The protein belongs to the TrhO family.

The catalysed reaction is uridine(34) in tRNA + AH2 + O2 = 5-hydroxyuridine(34) in tRNA + A + H2O. In terms of biological role, catalyzes oxygen-dependent 5-hydroxyuridine (ho5U) modification at position 34 in tRNAs. The chain is tRNA uridine(34) hydroxylase from Leptospira borgpetersenii serovar Hardjo-bovis (strain L550).